The following is a 233-amino-acid chain: Adenosine 5'-phosphosulfate reductase (233 aa).

Residues Cys120, Cys121, Cys203, and Cys206 each contribute to the [4Fe-4S] cluster site. Catalysis depends on Cys229, which acts as the Nucleophile; cysteine thiosulfonate intermediate.

It belongs to the PAPS reductase family. CysH subfamily. [4Fe-4S] cluster serves as cofactor.

The protein resides in the cytoplasm. It carries out the reaction [thioredoxin]-disulfide + sulfite + AMP + 2 H(+) = adenosine 5'-phosphosulfate + [thioredoxin]-dithiol. It functions in the pathway sulfur metabolism; hydrogen sulfide biosynthesis; sulfite from sulfate. Functionally, catalyzes the formation of sulfite from adenosine 5'-phosphosulfate (APS) using thioredoxin as an electron donor. This chain is Adenosine 5'-phosphosulfate reductase, found in Lysinibacillus sphaericus (strain C3-41).